The chain runs to 734 residues: Photosystem I P700 chlorophyll a apoprotein A2 (734 aa).

Helical transmembrane passes span 46 to 69 (IFAS…FHVA), 135 to 158 (LYTG…LHLQ), 175 to 199 (LNHH…HVAI), 273 to 291 (IAHH…GHMY), 330 to 353 (IHFQ…QHMY), 369 to 395 (AALY…IFFI), 417 to 439 (AIIS…LYVH), and 517 to 535 (FLVH…LILV). [4Fe-4S] cluster is bound by residues Cys559 and Cys568. 2 consecutive transmembrane segments (helical) span residues 575-596 (AFYL…YWHW) and 643-665 (LSVW…MFLI). Chlorophyll a-binding residues include His654, Met662, and Tyr670. Position 671 (Trp671) interacts with phylloquinone. Residues 707 to 727 (LVGLAHFSVGYIFTYAAFLIA) traverse the membrane as a helical segment.

Belongs to the PsaA/PsaB family. In terms of assembly, the PsaA/B heterodimer binds the P700 chlorophyll special pair and subsequent electron acceptors. PSI consists of a core antenna complex that captures photons, and an electron transfer chain that converts photonic excitation into a charge separation. The eukaryotic PSI reaction center is composed of at least 11 subunits. P700 is a chlorophyll a/chlorophyll a' dimer, A0 is one or more chlorophyll a, A1 is one or both phylloquinones and FX is a shared 4Fe-4S iron-sulfur center. is required as a cofactor.

The protein resides in the plastid. It is found in the chloroplast thylakoid membrane. The catalysed reaction is reduced [plastocyanin] + hnu + oxidized [2Fe-2S]-[ferredoxin] = oxidized [plastocyanin] + reduced [2Fe-2S]-[ferredoxin]. PsaA and PsaB bind P700, the primary electron donor of photosystem I (PSI), as well as the electron acceptors A0, A1 and FX. PSI is a plastocyanin-ferredoxin oxidoreductase, converting photonic excitation into a charge separation, which transfers an electron from the donor P700 chlorophyll pair to the spectroscopically characterized acceptors A0, A1, FX, FA and FB in turn. Oxidized P700 is reduced on the lumenal side of the thylakoid membrane by plastocyanin. This is Photosystem I P700 chlorophyll a apoprotein A2 from Vitis vinifera (Grape).